The sequence spans 213 residues: uncharacterized protein (213 aa).

Gly-53, Glu-74, and Asp-96 together coordinate S-adenosyl-L-methionine.

It belongs to the methyltransferase superfamily. YrrT family.

Could be a S-adenosyl-L-methionine-dependent methyltransferase. This is an uncharacterized protein from Oceanobacillus iheyensis (strain DSM 14371 / CIP 107618 / JCM 11309 / KCTC 3954 / HTE831).